The primary structure comprises 483 residues: Regulatory protein ViaA (483 aa).

This sequence belongs to the ViaA family. As to quaternary structure, homodimer. Interacts with RavA.

The protein resides in the cytoplasm. In terms of biological role, component of the RavA-ViaA chaperone complex, which may act on the membrane to optimize the function of some of the respiratory chains. ViaA stimulates the ATPase activity of RavA. The chain is Regulatory protein ViaA from Salmonella paratyphi A (strain ATCC 9150 / SARB42).